We begin with the raw amino-acid sequence, 1102 residues long: Putative ISWI chromatin-remodeling complex subunit YPL216W (1102 aa).

Residues 23–131 enclose the WAC domain; sequence ETPWVIKESS…DTVCLKTIQK (109 aa). The disordered stretch occupies residues 271 to 301; the sequence is ELYTPLTIPPESDVEPADWKETSETSETSET. A DDT domain is found at 375-435; it reads QFPTERLLVV…FLKTYNSKGS (61 aa). Residues 673 to 743 adopt a coiled-coil conformation; it reads CNGIRLKLDS…EDIAFLEAKL (71 aa).

It is found in the nucleus. May be required for the activity of an ISWI chromatin-remodeling complex. This Saccharomyces cerevisiae (strain ATCC 204508 / S288c) (Baker's yeast) protein is Putative ISWI chromatin-remodeling complex subunit YPL216W.